Here is a 447-residue protein sequence, read N- to C-terminus: Tubulin beta chain (447 aa).

GTP contacts are provided by Gln-11, Glu-69, Ser-138, Gly-142, Thr-143, Gly-144, Asn-204, and Asn-226. Glu-69 contributes to the Mg(2+) binding site. Residues 425–447 (YQDASISEGEEEYEEEVPIEGEE) are disordered. Residues 432 to 447 (EGEEEYEEEVPIEGEE) are compositionally biased toward acidic residues.

The protein belongs to the tubulin family. Dimer of alpha and beta chains. A typical microtubule is a hollow water-filled tube with an outer diameter of 25 nm and an inner diameter of 15 nM. Alpha-beta heterodimers associate head-to-tail to form protofilaments running lengthwise along the microtubule wall with the beta-tubulin subunit facing the microtubule plus end conferring a structural polarity. Microtubules usually have 13 protofilaments but different protofilament numbers can be found in some organisms and specialized cells. Requires Mg(2+) as cofactor.

The protein resides in the cytoplasm. It localises to the cytoskeleton. In terms of biological role, tubulin is the major constituent of microtubules, a cylinder consisting of laterally associated linear protofilaments composed of alpha- and beta-tubulin heterodimers. Microtubules grow by the addition of GTP-tubulin dimers to the microtubule end, where a stabilizing cap forms. Below the cap, tubulin dimers are in GDP-bound state, owing to GTPase activity of alpha-tubulin. This is Tubulin beta chain (tubA) from Botryotinia fuckeliana (Noble rot fungus).